A 65-amino-acid chain; its full sequence is Large ribosomal subunit protein bL35 (65 aa).

This sequence belongs to the bacterial ribosomal protein bL35 family.

The protein is Large ribosomal subunit protein bL35 of Photorhabdus laumondii subsp. laumondii (strain DSM 15139 / CIP 105565 / TT01) (Photorhabdus luminescens subsp. laumondii).